The sequence spans 570 residues: Auxin efflux carrier component 6 (570 aa).

Over 1–6 the chain is Extracellular; that stretch reads MITGNE. The chain crosses the membrane as a helical span at residues 7 to 27; that stretch reads FYTVMCAMAPLYFAMFVAYGS. Topologically, residues 28 to 38 are cytoplasmic; that stretch reads VKWCKIFTPAQ. The helical transmembrane segment at 39–59 threads the bilayer; it reads CSGINRFVSVFAVPVLSFHFI. Residue V51 participates in (indol-3-yl)acetate binding. The Extracellular segment spans residues 60 to 70; it reads SQNNPYKMDTM. A helical membrane pass occupies residues 71–91; sequence FILADTLSKIFVFVLLSLWAV. The Cytoplasmic portion of the chain corresponds to 92–100; sequence FFKAGGLDW. A helical membrane pass occupies residues 101–121; sequence LITLFSIATLPNTLVMGIPLL. Residues N112 and L114 each contribute to the (indol-3-yl)acetate site. At 122 to 131 the chain is on the extracellular side; the sequence is QAMYGDYTQT. Residues 132 to 152 form a helical membrane-spanning segment; that stretch reads LMVQLVVLQCIIWYTLLLFLF. Residue Y145 participates in (indol-3-yl)acetate binding. Residues 153-430 lie on the Cytoplasmic side of the membrane; sequence ELRAARLLIR…LSRNPNTYSS (278 aa). A phosphoserine mark is found at S230 and S308. A helical transmembrane segment spans residues 431 to 451; the sequence is LLGLVWSLISFKWNIPMPNIV. Topologically, residues 452-454 are extracellular; that stretch reads DFS. A helical transmembrane segment spans residues 455-475; sequence IKIISDAGLGMAMFSLGLFMA. The Cytoplasmic portion of the chain corresponds to 476 to 491; sequence LQPKMIPCGAKKATMG. A helical transmembrane segment spans residues 492–512; it reads MLIRFISGPLFMAGASLLVGL. At 513-515 the chain is on the extracellular side; that stretch reads RGS. A helical membrane pass occupies residues 516 to 536; it reads RLHAAIVQAALPQGIVPFVFA. I530 and V531 together coordinate (indol-3-yl)acetate. Over 537 to 549 the chain is Cytoplasmic; it reads REYNLHPDLLSTL. The chain crosses the membrane as a helical span at residues 550-570; the sequence is VIFGMIVSLPVTILYYVLLGL.

The protein belongs to the auxin efflux carrier (TC 2.A.69.1) family. Homodimer. As to expression, expressed in the vasculature of the primary root, cotyledons, floral stem, sepals and the main transmitting tract of the reproductive silique. Expressed in embryos, shoot meristem, root tip and lateral root meristems. Expressed in the nectaries and the floral organ boundaries of the anthers. Detected in pollen. Expressed in broad subepidermal domains that narrowed to sites of vein formation. Expressed in veins of mature leaves.

The protein resides in the endoplasmic reticulum membrane. Its function is as follows. Component of the intracellular auxin-transport pathway. Regulates auxin transport and auxin homeostasis. Directly involved in the regulation of nectar production. Involved in unfolded protein response (UPR) activation. Involved in the control of vein patterning. Redundantly with PIN8, inhibits the vein-formation-promoting functions of PIN5. PIN5, PIN6, and PIN8 control vein network geometry, but they are expressed in mutually exclusive domains of leaf vascular cells. The chain is Auxin efflux carrier component 6 from Arabidopsis thaliana (Mouse-ear cress).